A 787-amino-acid chain; its full sequence is Lon protease (787 aa).

Residues 12-210 (LPLIPLRGLA…LIYSILLEEI (199 aa)) enclose the Lon N-terminal domain. 362-369 (GPPGTGKT) is an ATP binding site. Positions 599–780 (NPQIGLVNGL…DEVLEQALLK (182 aa)) constitute a Lon proteolytic domain. Active-site residues include S686 and K729.

It belongs to the peptidase S16 family. As to quaternary structure, homohexamer. Organized in a ring with a central cavity.

The protein localises to the cytoplasm. It carries out the reaction Hydrolysis of proteins in presence of ATP.. Functionally, ATP-dependent serine protease that mediates the selective degradation of mutant and abnormal proteins as well as certain short-lived regulatory proteins. Required for cellular homeostasis and for survival from DNA damage and developmental changes induced by stress. Degrades polypeptides processively to yield small peptide fragments that are 5 to 10 amino acids long. Binds to DNA in a double-stranded, site-specific manner. This Clostridioides difficile (strain 630) (Peptoclostridium difficile) protein is Lon protease.